A 179-amino-acid polypeptide reads, in one-letter code: Small ribosomal subunit protein uS5 (179 aa).

Residues 22 to 85 form the S5 DRBM domain; sequence MIEKLVAVNR…EYARKRMANV (64 aa).

Belongs to the universal ribosomal protein uS5 family. In terms of assembly, part of the 30S ribosomal subunit. Contacts proteins S4 and S8.

Its function is as follows. With S4 and S12 plays an important role in translational accuracy. Located at the back of the 30S subunit body where it stabilizes the conformation of the head with respect to the body. The protein is Small ribosomal subunit protein uS5 of Xylella fastidiosa (strain M12).